Consider the following 318-residue polypeptide: MSRPIILDCDPGHDDAIALILALAHPELTPLAVTTSAGNQTPDKTLNNALRILTLLNRSDIPVAGGAVKPLSRELMIADNVHGETGLDGPALPAPSFQPQAVNAVELMAEKIRQSDKPVTLVPTGPLTNIALLLASHAELHAKIERIVLMGGAAGVGNWTPAAEFNIFVDPEAADIVFKSGIPITMCGLDVTHQAQIMDEDIERIRAIANPVAKCVAELLDFFMIYHRDPKWGFVGAPLHDPCTIAWLLNPALFDAQDCWVGIETQSELTLGMTVVDRYQLTGKPANATVLFGIDRQGFVDLLVDSLAVYTPTYLNRR.

H240 is an active-site residue.

Belongs to the IUNH family. RihA subfamily.

Its function is as follows. Hydrolyzes cytidine or uridine to ribose and cytosine or uracil, respectively. In Shewanella sp. (strain ANA-3), this protein is Pyrimidine-specific ribonucleoside hydrolase RihA.